The following is a 492-amino-acid chain: MGGRRGPNRTSYYRNPLCEPGSSGASGGGHSSSASVSSVRSRSRTTSGTGLSSPPLAAQTVVPLQHCKIPELPVQASILFELQLFFCQLIALFVHYINIYKTVWWYPPSHPPSHTSLNFHLIDFNLLMVTAIVLGRRFIGSIVKEASQRGKVSLFRSILLFLTRFTVLTATGWSLCRSLIHLFRTYSFLNLLFLCYPFGMYIPFLQLNYDLRKTNLFTHMASMGPREAVSGLARSRDYFLTLRETWKQHTRQLYGPEAMPTHACCLSPSLIRNEVEFLKMDFNWRMKEVLVSSMLSAYYVAFVPVWFVKNTHYYDKRWSCELFLLVSISTSVILMQHLLPASYCDLLHKAAAHLGCWQKVDPALCSNVLQHPWTEECMWPQGVLVKHSKNVYKAVGHYNVAIPSDVSHFRFHFFFSNPLRILNILLLLEGAVIVYQLYSLMSSEKWHQTISLALILFSNYYAFFKLLRDRLVLGKAYSYSASPQRDLDHRFS.

Positions 1 to 53 (MGGRRGPNRTSYYRNPLCEPGSSGASGGGHSSSASVSSVRSRSRTTSGTGLSS) are disordered. Asn8 carries an N-linked (GlcNAc...) asparagine glycan. Residues 31-53 (SSSASVSSVRSRSRTTSGTGLSS) are compositionally biased toward low complexity. 8 consecutive transmembrane segments (helical) span residues 77–97 (SILF…VHYI), 115–135 (TSLN…IVLG), 153–175 (SLFR…GWSL), 185–205 (TYSF…IPFL), 288–308 (EVLV…VWFV), 322–342 (LFLL…LPAS), 421–441 (ILNI…YSLM), and 447–467 (HQTI…FKLL).

The protein belongs to the TMEM39 family.

It is found in the endoplasmic reticulum membrane. Its function is as follows. May protect the cells against DNA damage caused by exposure to the cold-warming stress and facilitates tissue damage repair during the recovery phase. This chain is Transmembrane protein 39B, found in Mus musculus (Mouse).